The primary structure comprises 826 residues: Beta-galactosidase 7 (826 aa).

Positions 1 to 25 (MKMKHFTRLLSLFFILITSLSLAKS) are cleaved as a signal peptide. Asn-154 carries N-linked (GlcNAc...) asparagine glycosylation. Glu-184 (proton donor) is an active-site residue. Residue Glu-253 is the Nucleophile of the active site. N-linked (GlcNAc...) asparagine glycans are attached at residues Asn-254, Asn-351, Asn-380, Asn-491, Asn-665, Asn-706, Asn-797, and Asn-801. The region spanning 740–826 (AHEHNKVELS…PKKLAVELEC (87 aa)) is the SUEL-type lectin domain.

Belongs to the glycosyl hydrolase 35 family. As to expression, expressed in flowers.

It localises to the secreted. Its subcellular location is the extracellular space. It is found in the apoplast. It carries out the reaction Hydrolysis of terminal non-reducing beta-D-galactose residues in beta-D-galactosides.. The protein is Beta-galactosidase 7 (BGAL7) of Arabidopsis thaliana (Mouse-ear cress).